Reading from the N-terminus, the 166-residue chain is 3-hydroxyacyl-[acyl-carrier-protein] dehydratase FabZ (166 aa).

Histidine 72 is an active-site residue.

This sequence belongs to the thioester dehydratase family. FabZ subfamily.

The protein resides in the cytoplasm. The catalysed reaction is a (3R)-hydroxyacyl-[ACP] = a (2E)-enoyl-[ACP] + H2O. Involved in unsaturated fatty acids biosynthesis. Catalyzes the dehydration of short chain beta-hydroxyacyl-ACPs and long chain saturated and unsaturated beta-hydroxyacyl-ACPs. The protein is 3-hydroxyacyl-[acyl-carrier-protein] dehydratase FabZ of Synechococcus sp. (strain JA-3-3Ab) (Cyanobacteria bacterium Yellowstone A-Prime).